An 84-amino-acid chain; its full sequence is Cell division topological specificity factor (84 aa).

This sequence belongs to the MinE family.

Its function is as follows. Prevents the cell division inhibition by proteins MinC and MinD at internal division sites while permitting inhibition at polar sites. This ensures cell division at the proper site by restricting the formation of a division septum at the midpoint of the long axis of the cell. The protein is Cell division topological specificity factor of Rhodopseudomonas palustris (strain BisA53).